Here is a 576-residue protein sequence, read N- to C-terminus: MLSHEMASTAHRQPSRPTTRQRQRTGRACEECRRRKLRCDGQQPRCGVCVDSGVTCEVNSQRRPRGPKKGYLTALRNRVAMLETRLPAQHLVGPLSEFNPLSTPLTNDHHDGCSVSSASSRSDSNPPPTVSEPDMSLPNTTTSVSSAPSFATCSKDIGGAEPITELVQAELNQLYFDRVHPSIQILHQRRYLGWARNAAKKTSRRCLQYAVWTLASLLSAQFQHLQDSFYQETKRTLEFSYLSGDSNAPVDTEEIQAWILIATYESMRTFHRSAWMSAGRAFRLVQLMRLHEIDSPTKPPVPEADLVETEEKRRVFWMAYFLDHLLSMRNNWPITLNEHVICTRLPAPDMEFQSGQPVLGAFLSEAIMDVMPQTTSPFNECVILATICGRSLFHAQQYSVRFVYGELAPNWTDQHQWLDNVLTNRLQILSQYYPSPTQICDPMLSFAHIMGQASVIHLYKGMASVVWAVDDGAWVVEYQRRALSAAQEIVKLAKGLTEFNFFKVHPLMPIPLLLCAEFLYSNRGSDAAFNSLLQELLQIFRQLKNANDPSRSYIHLLELSCTTASMSLVREHSNAP.

The segment at M1–R27 is disordered. The segment at residues C29–C56 is a DNA-binding region (zn(2)-C6 fungal-type). The tract at residues S102 to P148 is disordered. A compositionally biased stretch (low complexity) spans S114 to S124. The segment covering L137–P148 has biased composition (polar residues).

The protein localises to the nucleus. Transcription factor that regulates the expression of the gene cluster that mediates the biosynthesis of the mycotoxin citrinin, a hepato-nephrotoxic compound to humans due to inhibition of respiration complex III. The sequence is that of Citrinin biosynthesis transcriptional activator ctnR from Monascus purpureus (Red mold).